The following is a 256-amino-acid chain: Small ribosomal subunit protein eS1 (256 aa).

N-acetylalanine; partial is present on Ala-2.

It belongs to the eukaryotic ribosomal protein eS1 family. As to quaternary structure, component of the small ribosomal subunit. Mature ribosomes consist of a small (40S) and a large (60S) subunit. The 40S subunit contains about 33 different proteins and 1 molecule of RNA (18S). The 60S subunit contains about 49 different proteins and 3 molecules of RNA (25S, 5.8S and 5S).

The protein localises to the cytoplasm. This chain is Small ribosomal subunit protein eS1 (rps1), found in Botryotinia fuckeliana (strain B05.10) (Noble rot fungus).